Consider the following 126-residue polypeptide: Small ribosomal subunit protein uS13 (126 aa).

The tract at residues 92–126 (HRRGLPVRGQRTKTNARTRKGPKKTVAGKKKATRK) is disordered.

Belongs to the universal ribosomal protein uS13 family. In terms of assembly, part of the 30S ribosomal subunit. Forms a loose heterodimer with protein S19. Forms two bridges to the 50S subunit in the 70S ribosome.

Its function is as follows. Located at the top of the head of the 30S subunit, it contacts several helices of the 16S rRNA. In the 70S ribosome it contacts the 23S rRNA (bridge B1a) and protein L5 of the 50S subunit (bridge B1b), connecting the 2 subunits; these bridges are implicated in subunit movement. Contacts the tRNAs in the A and P-sites. This Deinococcus deserti (strain DSM 17065 / CIP 109153 / LMG 22923 / VCD115) protein is Small ribosomal subunit protein uS13.